Consider the following 160-residue polypeptide: UPF0178 protein PLES_56411 (160 aa).

The protein belongs to the UPF0178 family.

This Pseudomonas aeruginosa (strain LESB58) protein is UPF0178 protein PLES_56411.